The sequence spans 913 residues: Isoleucine--tRNA ligase (913 aa).

The 'HIGH' region motif lies at 57–67 (PYANGDIHLGT). Glutamate 549 is an L-isoleucyl-5'-AMP binding site. A 'KMSKS' region motif is present at residues 590 to 594 (KMSKS). ATP is bound at residue lysine 593. 4 residues coordinate Zn(2+): cysteine 881, cysteine 884, cysteine 901, and cysteine 904.

It belongs to the class-I aminoacyl-tRNA synthetase family. IleS type 1 subfamily. Monomer. The cofactor is Zn(2+).

The protein resides in the cytoplasm. It catalyses the reaction tRNA(Ile) + L-isoleucine + ATP = L-isoleucyl-tRNA(Ile) + AMP + diphosphate. Catalyzes the attachment of isoleucine to tRNA(Ile). As IleRS can inadvertently accommodate and process structurally similar amino acids such as valine, to avoid such errors it has two additional distinct tRNA(Ile)-dependent editing activities. One activity is designated as 'pretransfer' editing and involves the hydrolysis of activated Val-AMP. The other activity is designated 'posttransfer' editing and involves deacylation of mischarged Val-tRNA(Ile). The protein is Isoleucine--tRNA ligase of Fervidobacterium nodosum (strain ATCC 35602 / DSM 5306 / Rt17-B1).